Reading from the N-terminus, the 125-residue chain is UPF0538 protein C2C4.04c (125 aa).

It belongs to the UPF0538 family.

The protein is UPF0538 protein C2C4.04c of Schizosaccharomyces pombe (strain 972 / ATCC 24843) (Fission yeast).